The primary structure comprises 384 residues: Cell division protein FtsZ (384 aa).

GTP is bound by residues 20–24 (GGGSN), 107–109 (GTG), Glu-138, Arg-142, and Asn-186.

It belongs to the FtsZ family. In terms of assembly, homodimer. Polymerizes to form a dynamic ring structure in a strictly GTP-dependent manner. Interacts directly with several other division proteins.

Its subcellular location is the cytoplasm. Functionally, essential cell division protein that forms a contractile ring structure (Z ring) at the future cell division site. The regulation of the ring assembly controls the timing and the location of cell division. One of the functions of the FtsZ ring is to recruit other cell division proteins to the septum to produce a new cell wall between the dividing cells. Binds GTP and shows GTPase activity. This chain is Cell division protein FtsZ, found in Buchnera aphidicola subsp. Acyrthosiphon pisum (strain APS) (Acyrthosiphon pisum symbiotic bacterium).